The sequence spans 363 residues: 3-dehydroquinate synthase (363 aa).

NAD(+) is bound by residues Thr134 to Thr135, Lys147, and Lys156. Zn(2+)-binding residues include Glu189, His254, and His271.

It belongs to the sugar phosphate cyclases superfamily. Dehydroquinate synthase family. The cofactor is Co(2+). Requires Zn(2+) as cofactor. NAD(+) is required as a cofactor.

It localises to the cytoplasm. It carries out the reaction 7-phospho-2-dehydro-3-deoxy-D-arabino-heptonate = 3-dehydroquinate + phosphate. The protein operates within metabolic intermediate biosynthesis; chorismate biosynthesis; chorismate from D-erythrose 4-phosphate and phosphoenolpyruvate: step 2/7. Functionally, catalyzes the conversion of 3-deoxy-D-arabino-heptulosonate 7-phosphate (DAHP) to dehydroquinate (DHQ). This is 3-dehydroquinate synthase from Prochlorococcus marinus (strain MIT 9312).